We begin with the raw amino-acid sequence, 305 residues long: uncharacterized protein (305 aa).

The next 3 membrane-spanning stretches (helical) occupy residues 52–72, 89–109, and 120–140; these read TINLTSAIIILVVGMFISKII, IAGFLSALMRYIIITFTFIAA, and VIAILGAAGMAIGLALQGSLS.

This sequence belongs to the MscS (TC 1.A.23) family.

It is found in the cell membrane. This is an uncharacterized protein from Buchnera aphidicola subsp. Acyrthosiphon pisum (strain APS) (Acyrthosiphon pisum symbiotic bacterium).